The following is an 807-amino-acid chain: Glycerol-3-phosphate acyltransferase (807 aa).

The HXXXXD motif motif lies at 305 to 310 (CHRSHM).

The protein belongs to the GPAT/DAPAT family.

The protein resides in the cell inner membrane. The enzyme catalyses sn-glycerol 3-phosphate + an acyl-CoA = a 1-acyl-sn-glycero-3-phosphate + CoA. It functions in the pathway phospholipid metabolism; CDP-diacylglycerol biosynthesis; CDP-diacylglycerol from sn-glycerol 3-phosphate: step 1/3. The polypeptide is Glycerol-3-phosphate acyltransferase (Aliivibrio fischeri (strain ATCC 700601 / ES114) (Vibrio fischeri)).